The following is a 63-amino-acid chain: Small ribosomal subunit protein eS30B (63 aa).

The interval 1-35 (MAKVHGSLARAGKVKSQTPKVEKTEKPKKPKGRAY) is disordered. Ser16 is subject to Phosphoserine. Phosphothreonine is present on Thr48.

Belongs to the eukaryotic ribosomal protein eS30 family. Component of the small ribosomal subunit (SSU). Mature yeast ribosomes consist of a small (40S) and a large (60S) subunit. The 40S small subunit contains 1 molecule of ribosomal RNA (18S rRNA) and 33 different proteins (encoded by 57 genes). The large 60S subunit contains 3 rRNA molecules (25S, 5.8S and 5S rRNA) and 46 different proteins (encoded by 81 genes).

The protein localises to the cytoplasm. Its function is as follows. Component of the ribosome, a large ribonucleoprotein complex responsible for the synthesis of proteins in the cell. The small ribosomal subunit (SSU) binds messenger RNAs (mRNAs) and translates the encoded message by selecting cognate aminoacyl-transfer RNA (tRNA) molecules. The large subunit (LSU) contains the ribosomal catalytic site termed the peptidyl transferase center (PTC), which catalyzes the formation of peptide bonds, thereby polymerizing the amino acids delivered by tRNAs into a polypeptide chain. The nascent polypeptides leave the ribosome through a tunnel in the LSU and interact with protein factors that function in enzymatic processing, targeting, and the membrane insertion of nascent chains at the exit of the ribosomal tunnel. This chain is Small ribosomal subunit protein eS30B, found in Saccharomyces cerevisiae (strain ATCC 204508 / S288c) (Baker's yeast).